Consider the following 407-residue polypeptide: Putative F-box protein At2g16220 (407 aa).

The F-box domain occupies 1–45; it reads MNSHFLTNDLILEVLSRLPLKSVARFHCVSKRWASMFGSPYFKEL. The disordered stretch occupies residues 385 to 407; the sequence is PPSVQPEYDESDSESEEDREIII. Residues 391–407 show a composition bias toward acidic residues; it reads EYDESDSESEEDREIII.

This Arabidopsis thaliana (Mouse-ear cress) protein is Putative F-box protein At2g16220.